The chain runs to 457 residues: Bifunctional protein GlmU (457 aa).

The tract at residues 1-230 (MLNVVILAAG…SWETLGVNSR (230 aa)) is pyrophosphorylase. UDP-N-acetyl-alpha-D-glucosamine is bound by residues 7 to 10 (LAAG), Lys21, Gln73, 78 to 79 (GT), 104 to 106 (YGD), Gly140, Glu155, Asn170, and Asn228. Asp106 lines the Mg(2+) pocket. Asn228 is a binding site for Mg(2+). The tract at residues 231 to 251 (VQQAQLERAWQSELARRQLEA) is linker. An N-acetyltransferase region spans residues 252 to 457 (GVTLADPARF…EGWKRPVKKS (206 aa)). The UDP-N-acetyl-alpha-D-glucosamine site is built by Arg334 and Lys352. His364 functions as the Proton acceptor in the catalytic mechanism. Residues Tyr367 and Asn378 each contribute to the UDP-N-acetyl-alpha-D-glucosamine site. Residues Ala381, 387–388 (NY), Ser406, Ala424, and Arg441 each bind acetyl-CoA.

The protein in the N-terminal section; belongs to the N-acetylglucosamine-1-phosphate uridyltransferase family. It in the C-terminal section; belongs to the transferase hexapeptide repeat family. In terms of assembly, homotrimer. Mg(2+) is required as a cofactor.

It localises to the cytoplasm. It catalyses the reaction alpha-D-glucosamine 1-phosphate + acetyl-CoA = N-acetyl-alpha-D-glucosamine 1-phosphate + CoA + H(+). The enzyme catalyses N-acetyl-alpha-D-glucosamine 1-phosphate + UTP + H(+) = UDP-N-acetyl-alpha-D-glucosamine + diphosphate. Its pathway is nucleotide-sugar biosynthesis; UDP-N-acetyl-alpha-D-glucosamine biosynthesis; N-acetyl-alpha-D-glucosamine 1-phosphate from alpha-D-glucosamine 6-phosphate (route II): step 2/2. The protein operates within nucleotide-sugar biosynthesis; UDP-N-acetyl-alpha-D-glucosamine biosynthesis; UDP-N-acetyl-alpha-D-glucosamine from N-acetyl-alpha-D-glucosamine 1-phosphate: step 1/1. It functions in the pathway bacterial outer membrane biogenesis; LPS lipid A biosynthesis. In terms of biological role, catalyzes the last two sequential reactions in the de novo biosynthetic pathway for UDP-N-acetylglucosamine (UDP-GlcNAc). The C-terminal domain catalyzes the transfer of acetyl group from acetyl coenzyme A to glucosamine-1-phosphate (GlcN-1-P) to produce N-acetylglucosamine-1-phosphate (GlcNAc-1-P), which is converted into UDP-GlcNAc by the transfer of uridine 5-monophosphate (from uridine 5-triphosphate), a reaction catalyzed by the N-terminal domain. The polypeptide is Bifunctional protein GlmU (Bordetella bronchiseptica (strain ATCC BAA-588 / NCTC 13252 / RB50) (Alcaligenes bronchisepticus)).